The sequence spans 111 residues: Integration host factor subunit alpha (111 aa).

Belongs to the bacterial histone-like protein family. In terms of assembly, heterodimer of an alpha and a beta chain.

This protein is one of the two subunits of integration host factor, a specific DNA-binding protein that functions in genetic recombination as well as in transcriptional and translational control. The sequence is that of Integration host factor subunit alpha from Chelativorans sp. (strain BNC1).